A 253-amino-acid chain; its full sequence is Ribosome-inactivating protein saporin-9 (253 aa).

Glu-176 is a catalytic residue.

It catalyses the reaction Endohydrolysis of the N-glycosidic bond at one specific adenosine on the 28S rRNA.. Ribosome-inactivating protein of type 1, inhibits protein synthesis in animal cells. The protein is Ribosome-inactivating protein saporin-9 (SAP9) of Saponaria officinalis (Common soapwort).